The following is a 305-amino-acid chain: Glycine--tRNA ligase alpha subunit (305 aa).

Belongs to the class-II aminoacyl-tRNA synthetase family. Tetramer of two alpha and two beta subunits.

The protein localises to the cytoplasm. It catalyses the reaction tRNA(Gly) + glycine + ATP = glycyl-tRNA(Gly) + AMP + diphosphate. The polypeptide is Glycine--tRNA ligase alpha subunit (Streptococcus suis (strain 05ZYH33)).